The primary structure comprises 407 residues: Polygalacturonase (407 aa).

Positions 1–26 (MAPHLNIVPSMFVLLLLFISASKVQS) are cleaved as a signal peptide. 2 PbH1 repeats span residues 180–206 (CKNITLERLKIEAPDESPNTDGIHMGK) and 207–228 (SEGVNIIASDIKTGDDCISIGD). N-linked (GlcNAc...) asparagine glycosylation is present at Asn-182. Asp-221 acts as the Proton donor in catalysis. Residues Cys-223 and Cys-240 are joined by a disulfide bond. Residue His-244 is part of the active site. 2 PbH1 repeats span residues 260–281 (VEGIKISNCTITNTSNGARIKT) and 290–311 (VSEIHFEDITMNNVSSPILIDQ). Asn-267, Asn-272, Asn-302, and Asn-331 each carry an N-linked (GlcNAc...) asparagine glycan. Intrachain disulfides connect Cys-351-Cys-357 and Cys-379-Cys-395. Residues 357–384 (CQNVELADIDIKHNGAEPATSQCLNVKP) form a PbH1 5 repeat.

The protein belongs to the glycosyl hydrolase 28 family. Pollen.

Its subcellular location is the secreted. The protein localises to the cell wall. The catalysed reaction is (1,4-alpha-D-galacturonosyl)n+m + H2O = (1,4-alpha-D-galacturonosyl)n + (1,4-alpha-D-galacturonosyl)m.. Its function is as follows. May function in the depolymerization of the pectin in its walls during pollen tube elongation, or in that of the pistil during pollination. The polypeptide is Polygalacturonase (G9) (Gossypium hirsutum (Upland cotton)).